A 264-amino-acid chain; its full sequence is Thymidylate synthase (264 aa).

Arg-21 contacts dUMP. His-51 is a (6R)-5,10-methylene-5,6,7,8-tetrahydrofolate binding site. Position 126 to 127 (126 to 127 (RR)) interacts with dUMP. Cys-146 functions as the Nucleophile in the catalytic mechanism. Residues 166–169 (RSCD), Asn-177, and 207–209 (HLY) each bind dUMP. Residue Asp-169 coordinates (6R)-5,10-methylene-5,6,7,8-tetrahydrofolate. Residue Ala-263 participates in (6R)-5,10-methylene-5,6,7,8-tetrahydrofolate binding.

The protein belongs to the thymidylate synthase family. Bacterial-type ThyA subfamily. Homodimer.

The protein localises to the cytoplasm. It catalyses the reaction dUMP + (6R)-5,10-methylene-5,6,7,8-tetrahydrofolate = 7,8-dihydrofolate + dTMP. Its pathway is pyrimidine metabolism; dTTP biosynthesis. Its function is as follows. Catalyzes the reductive methylation of 2'-deoxyuridine-5'-monophosphate (dUMP) to 2'-deoxythymidine-5'-monophosphate (dTMP) while utilizing 5,10-methylenetetrahydrofolate (mTHF) as the methyl donor and reductant in the reaction, yielding dihydrofolate (DHF) as a by-product. This enzymatic reaction provides an intracellular de novo source of dTMP, an essential precursor for DNA biosynthesis. In Salmonella arizonae (strain ATCC BAA-731 / CDC346-86 / RSK2980), this protein is Thymidylate synthase.